The chain runs to 270 residues: uncharacterized protein (270 aa).

A signal peptide spans 1 to 22 (MEYIKKIALYMSVLLLIIFIGG). Cys23 is lipidated: N-palmitoyl cysteine. Cys23 carries S-diacylglycerol cysteine lipidation.

Belongs to the staphylococcal tandem lipoprotein family.

It localises to the cell membrane. This is an uncharacterized protein from Staphylococcus aureus (strain N315).